The chain runs to 201 residues: Adenylyl-sulfate kinase (201 aa).

35 to 42 (GLSGSGKS) contacts ATP. Ser109 serves as the catalytic Phosphoserine intermediate.

The protein belongs to the APS kinase family.

The catalysed reaction is adenosine 5'-phosphosulfate + ATP = 3'-phosphoadenylyl sulfate + ADP + H(+). The protein operates within sulfur metabolism; hydrogen sulfide biosynthesis; sulfite from sulfate: step 2/3. In terms of biological role, catalyzes the synthesis of activated sulfate. The polypeptide is Adenylyl-sulfate kinase (Prochlorococcus marinus (strain SARG / CCMP1375 / SS120)).